The primary structure comprises 260 residues: Ribosomal RNA small subunit methyltransferase J (260 aa).

S-adenosyl-L-methionine is bound by residues Glu125–Arg126 and Asp179.

This sequence belongs to the methyltransferase superfamily. RsmJ family.

The protein localises to the cytoplasm. It catalyses the reaction guanosine(1516) in 16S rRNA + S-adenosyl-L-methionine = N(2)-methylguanosine(1516) in 16S rRNA + S-adenosyl-L-homocysteine + H(+). In terms of biological role, specifically methylates the guanosine in position 1516 of 16S rRNA. The sequence is that of Ribosomal RNA small subunit methyltransferase J from Pseudomonas fluorescens (strain ATCC BAA-477 / NRRL B-23932 / Pf-5).